Consider the following 460-residue polypeptide: UDP-N-acetylmuramoylalanine--D-glutamate ligase (460 aa).

Residue 122-128 coordinates ATP; it reads GSNGKST.

Belongs to the MurCDEF family.

The protein resides in the cytoplasm. It carries out the reaction UDP-N-acetyl-alpha-D-muramoyl-L-alanine + D-glutamate + ATP = UDP-N-acetyl-alpha-D-muramoyl-L-alanyl-D-glutamate + ADP + phosphate + H(+). The protein operates within cell wall biogenesis; peptidoglycan biosynthesis. Functionally, cell wall formation. Catalyzes the addition of glutamate to the nucleotide precursor UDP-N-acetylmuramoyl-L-alanine (UMA). This Jannaschia sp. (strain CCS1) protein is UDP-N-acetylmuramoylalanine--D-glutamate ligase.